The chain runs to 99 residues: MLNKNKRWYLIALYDIYQGLLTTKQCEYFNLHYFKDLSFSEIAELKEVSKSAISDCLNKVCDQLLKYEQALLIYEKNKKRNDLYTLINDSELVKKLKDI.

Belongs to the UPF0122 family.

Functionally, might take part in the signal recognition particle (SRP) pathway. This is inferred from the conservation of its genetic proximity to ftsY/ffh. May be a regulatory protein. This Ureaplasma urealyticum serovar 10 (strain ATCC 33699 / Western) protein is UPF0122 protein UUR10_0158.